Consider the following 388-residue polypeptide: Ovalbumin-related protein Y (388 aa).

Cysteines 74 and 121 form a disulfide. N95, N215, N293, and N312 each carry an N-linked (GlcNAc...) asparagine glycan.

Belongs to the serpin family. Ov-serpin subfamily. Post-translationally, N-glycosylated on at least two Asn residues by ovomucoid type carbohydrate units. The N-terminus is blocked. In terms of tissue distribution, major protein of egg white. Expressed in the magnum of the oviduct (at protein level).

It localises to the secreted. The polypeptide is Ovalbumin-related protein Y (SERPINB14B) (Gallus gallus (Chicken)).